A 397-amino-acid polypeptide reads, in one-letter code: GTPase Obg (397 aa).

Positions Met-1–Leu-159 constitute an Obg domain. The tract at residues Ser-22 to Ser-44 is disordered. Positions Gly-33–Gly-43 are enriched in gly residues. The OBG-type G domain occupies Ala-160–Glu-333. GTP contacts are provided by residues Gly-166 to Ser-173, Phe-191 to Val-195, Asp-213 to Gly-216, Asn-283 to Asp-286, and Ser-314 to Val-316. Residues Ser-173 and Thr-193 each coordinate Mg(2+). Residues Thr-359–Asp-389 form a disordered region. Acidic residues predominate over residues Glu-361–Asp-389.

This sequence belongs to the TRAFAC class OBG-HflX-like GTPase superfamily. OBG GTPase family. As to quaternary structure, monomer. Mg(2+) is required as a cofactor.

The protein localises to the cytoplasm. Its function is as follows. An essential GTPase which binds GTP, GDP and possibly (p)ppGpp with moderate affinity, with high nucleotide exchange rates and a fairly low GTP hydrolysis rate. Plays a role in control of the cell cycle, stress response, ribosome biogenesis and in those bacteria that undergo differentiation, in morphogenesis control. The sequence is that of GTPase Obg from Pseudoalteromonas atlantica (strain T6c / ATCC BAA-1087).